The sequence spans 133 residues: Minor spike protein H (133 aa).

The protein belongs to the microviridae H protein family.

It localises to the virion. Its function is as follows. Probably triggers with protein G the injection of the phage DNA into the host upon conformational changes induced by virus-host receptor interaction. This chain is Minor spike protein H, found in Spiroplasma virus 4 (SpV4).